Here is a 429-residue protein sequence, read N- to C-terminus: Glutamate-1-semialdehyde 2,1-aminomutase (429 aa).

Lys267 is modified (N6-(pyridoxal phosphate)lysine).

This sequence belongs to the class-III pyridoxal-phosphate-dependent aminotransferase family. HemL subfamily. As to quaternary structure, homodimer. Requires pyridoxal 5'-phosphate as cofactor.

It is found in the cytoplasm. It carries out the reaction (S)-4-amino-5-oxopentanoate = 5-aminolevulinate. The protein operates within porphyrin-containing compound metabolism; protoporphyrin-IX biosynthesis; 5-aminolevulinate from L-glutamyl-tRNA(Glu): step 2/2. The protein is Glutamate-1-semialdehyde 2,1-aminomutase of Stenotrophomonas maltophilia (strain R551-3).